Here is a 150-residue protein sequence, read N- to C-terminus: Ribonuclease H (150 aa).

Residues 1-142 (MSDSVELFTD…ADQLANRGVD (142 aa)) enclose the RNase H type-1 domain. Residues Asp-10, Glu-48, Asp-70, and Asp-134 each coordinate Mg(2+).

This sequence belongs to the RNase H family. In terms of assembly, monomer. It depends on Mg(2+) as a cofactor.

The protein localises to the cytoplasm. It carries out the reaction Endonucleolytic cleavage to 5'-phosphomonoester.. In terms of biological role, endonuclease that specifically degrades the RNA of RNA-DNA hybrids. The protein is Ribonuclease H of Pseudomonas syringae pv. syringae (strain B728a).